The sequence spans 598 residues: Nicotinamide riboside transporter 1 (598 aa).

11 helical membrane-spanning segments follow: residues 48 to 68 (LAYW…SAAL), 71 to 91 (GLSY…TIIF), 112 to 132 (FVFG…MSIV), 174 to 194 (LVGF…KPYH), 197 to 217 (YLLI…VIYL), 241 to 261 (AWAW…GSTN), 273 to 293 (LAIW…VPIF), 372 to 392 (GALF…YNSS), 395 to 415 (FLTV…VMIC), 447 to 467 (AIVA…WEVN), and 484 to 504 (SFFS…FFPF). Residues Ser-560 and Ser-572 each carry the phosphoserine modification.

It belongs to the purine-cytosine permease (2.A.39) family.

It localises to the cell membrane. In terms of biological role, high-affinity pH-dependent nicotinamide riboside transporter which also transports thiamine with low affinity. Involved in 5-fluorocytosine sensitivity. In Saccharomyces cerevisiae (strain ATCC 204508 / S288c) (Baker's yeast), this protein is Nicotinamide riboside transporter 1 (NRT1).